The following is a 152-amino-acid chain: Large ribosomal subunit protein uL15 (152 aa).

Positions 1–66 (MRSNPMTLRL…GFEGGQTPMQ (66 aa)) are disordered. Residues 28 to 38 (RGIGSGLGKTA) show a composition bias toward gly residues. Basic residues predominate over residues 39 to 52 (GRGHKGSFARKGGG).

The protein belongs to the universal ribosomal protein uL15 family. As to quaternary structure, part of the 50S ribosomal subunit.

Binds to the 23S rRNA. The sequence is that of Large ribosomal subunit protein uL15 from Xanthomonas oryzae pv. oryzae (strain KACC10331 / KXO85).